The primary structure comprises 307 residues: Salivary glue protein Sgs-3 (307 aa).

The signal sequence occupies residues 1–23; the sequence is MKLTIATALASILLIGSANVANC. Residues 56 to 257 form a disordered region; that stretch reads APPTQQSTTQ…PTTTKPTTPK (202 aa).

In terms of processing, O-glycosylated by Pgnat9 in salivary glands. Specifically expressed in the salivary gland.

The protein resides in the secreted. In Drosophila melanogaster (Fruit fly), this protein is Salivary glue protein Sgs-3.